A 98-amino-acid chain; its full sequence is NADH-ubiquinone oxidoreductase chain 4L (98 aa).

A run of 3 helical transmembrane segments spans residues 2-22 (PSIS…MLVF), 29-49 (SLLC…LTIM), and 61-81 (ILLL…LVMM).

The protein belongs to the complex I subunit 4L family. As to quaternary structure, core subunit of respiratory chain NADH dehydrogenase (Complex I) which is composed of 45 different subunits.

The protein localises to the mitochondrion inner membrane. It carries out the reaction a ubiquinone + NADH + 5 H(+)(in) = a ubiquinol + NAD(+) + 4 H(+)(out). Functionally, core subunit of the mitochondrial membrane respiratory chain NADH dehydrogenase (Complex I) which catalyzes electron transfer from NADH through the respiratory chain, using ubiquinone as an electron acceptor. Part of the enzyme membrane arm which is embedded in the lipid bilayer and involved in proton translocation. The sequence is that of NADH-ubiquinone oxidoreductase chain 4L (MT-ND4L) from Lepilemur seali (Seal's sportive lemur).